Here is a 415-residue protein sequence, read N- to C-terminus: Diaminopimelate decarboxylase (415 aa).

An N6-(pyridoxal phosphate)lysine modification is found at K54. Residues G223 and 264–267 each bind pyridoxal 5'-phosphate; that span reads EPGR. The substrate site is built by R267, R303, and Y307. C338 functions as the Proton donor in the catalytic mechanism. Substrate contacts are provided by E339 and Y374. Pyridoxal 5'-phosphate is bound at residue Y374.

The protein belongs to the Orn/Lys/Arg decarboxylase class-II family. LysA subfamily. As to quaternary structure, homodimer. It depends on pyridoxal 5'-phosphate as a cofactor.

The catalysed reaction is meso-2,6-diaminopimelate + H(+) = L-lysine + CO2. It functions in the pathway amino-acid biosynthesis; L-lysine biosynthesis via DAP pathway; L-lysine from DL-2,6-diaminopimelate: step 1/1. Its function is as follows. Specifically catalyzes the decarboxylation of meso-diaminopimelate (meso-DAP) to L-lysine. This chain is Diaminopimelate decarboxylase, found in Buchnera aphidicola subsp. Acyrthosiphon pisum (strain APS) (Acyrthosiphon pisum symbiotic bacterium).